A 461-amino-acid chain; its full sequence is Cysteine--tRNA ligase (461 aa).

C28 lines the Zn(2+) pocket. Residues 30 to 40 (ITVYDLCHIGH) carry the 'HIGH' region motif. The Zn(2+) site is built by C209, H234, and E238. Residues 266–270 (KMSKS) carry the 'KMSKS' region motif. An ATP-binding site is contributed by K269.

Belongs to the class-I aminoacyl-tRNA synthetase family. In terms of assembly, monomer. Requires Zn(2+) as cofactor.

It is found in the cytoplasm. The catalysed reaction is tRNA(Cys) + L-cysteine + ATP = L-cysteinyl-tRNA(Cys) + AMP + diphosphate. The sequence is that of Cysteine--tRNA ligase from Escherichia coli (strain 55989 / EAEC).